Here is a 145-residue protein sequence, read N- to C-terminus: Alpha-amylase/trypsin inhibitor CMa (145 aa).

Positions methionine 1–alanine 25 are cleaved as a signal peptide.

The protein belongs to the protease inhibitor I6 (cereal trypsin/alpha-amylase inhibitor) family. As to quaternary structure, heterotetramer of one CMa, one CMb and two CMd chains. Post-translationally, five disulfide bonds, which are essential for the inhibitor activity, are probably present. In terms of tissue distribution, endosperm.

It is found in the secreted. Its function is as follows. Alpha-amylase/trypsin inhibitor. It could be involved in insect defense mechanisms. The chain is Alpha-amylase/trypsin inhibitor CMa (IAT1) from Hordeum vulgare (Barley).